We begin with the raw amino-acid sequence, 418 residues long: Glutamyl-tRNA reductase (418 aa).

Residues 49–52, Ser-109, 114–116, and Gln-120 contribute to the substrate site; these read TCNR and EPQ. Cys-50 functions as the Nucleophile in the catalytic mechanism. 189–194 is an NADP(+) binding site; the sequence is GAGETI.

It belongs to the glutamyl-tRNA reductase family. As to quaternary structure, homodimer.

The catalysed reaction is (S)-4-amino-5-oxopentanoate + tRNA(Glu) + NADP(+) = L-glutamyl-tRNA(Glu) + NADPH + H(+). The protein operates within porphyrin-containing compound metabolism; protoporphyrin-IX biosynthesis; 5-aminolevulinate from L-glutamyl-tRNA(Glu): step 1/2. Its function is as follows. Catalyzes the NADPH-dependent reduction of glutamyl-tRNA(Glu) to glutamate 1-semialdehyde (GSA). The polypeptide is Glutamyl-tRNA reductase (Escherichia coli O7:K1 (strain IAI39 / ExPEC)).